The primary structure comprises 84 residues: MDLNAKQMTSEEFSKLIENQGVMGKSNITFVIGGSLGLSQAVIKRENYKVCFSKMTFPHQLFRIMLLEQVYRAFRIMKNEPYHK.

S-adenosyl-L-methionine is bound by residues G33 and 52-57 (FSKMTF).

This sequence belongs to the RNA methyltransferase RlmH family. Homodimer.

The protein resides in the cytoplasm. The catalysed reaction is pseudouridine(1915) in 23S rRNA + S-adenosyl-L-methionine = N(3)-methylpseudouridine(1915) in 23S rRNA + S-adenosyl-L-homocysteine + H(+). Functionally, specifically methylates the pseudouridine at position 1915 (m3Psi1915) in 23S rRNA. This Clostridium perfringens (strain SM101 / Type A) protein is Putative ribosomal RNA large subunit methyltransferase H 2 (rlmH2).